A 65-amino-acid chain; its full sequence is Alpha-toxin Bot1 (65 aa).

The LCN-type CS-alpha/beta domain maps to 2–64 (RDAYIAQPEN…VPIRIPGKCH (63 aa)). Disulfide bonds link Cys-12–Cys-63, Cys-16–Cys-36, Cys-22–Cys-46, and Cys-26–Cys-48. The residue at position 65 (Phe-65) is a Phenylalanine amide.

This sequence belongs to the long (4 C-C) scorpion toxin superfamily. Sodium channel inhibitor family. Alpha subfamily. As to expression, expressed by the venom gland.

It is found in the secreted. Its function is as follows. Alpha toxins bind voltage-independently at site-3 of sodium channels (Nav) and inhibit the inactivation of the activated channels, thereby blocking neuronal transmission. In Buthus occitanus tunetanus (Common European scorpion), this protein is Alpha-toxin Bot1.